Here is a 78-residue protein sequence, read N- to C-terminus: MALIDEIKDVVANQLNISDKSKITDTASFVDDLNADSLDLVELIMELEKRYEIKIPQEDQEKIKNVADAAKYIEEHKK.

The Carrier domain maps to 1 to 77 (MALIDEIKDV…DAAKYIEEHK (77 aa)). The residue at position 37 (Ser-37) is an O-(pantetheine 4'-phosphoryl)serine.

It belongs to the acyl carrier protein (ACP) family. Post-translationally, 4'-phosphopantetheine is transferred from CoA to a specific serine of apo-ACP by AcpS. This modification is essential for activity because fatty acids are bound in thioester linkage to the sulfhydryl of the prosthetic group.

The protein localises to the secreted. It participates in lipid metabolism; fatty acid biosynthesis. In terms of biological role, carrier of the growing fatty acid chain in fatty acid biosynthesis. Has hemolytic activity forming pores approximately 1 nm in diameter into erythrocytes. Is able to induce murine colonic lesions and to disrupt the integrity of epithelial cell monolayers. The polypeptide is Acyl carrier protein (acpP) (Brachyspira hyodysenteriae (Treponema hyodysenteriae)).